A 196-amino-acid polypeptide reads, in one-letter code: Probable malonic semialdehyde reductase RutE (196 aa).

The protein belongs to the nitroreductase family. HadB/RutE subfamily. Requires FMN as cofactor.

It catalyses the reaction 3-hydroxypropanoate + NADP(+) = 3-oxopropanoate + NADPH + H(+). May reduce toxic product malonic semialdehyde to 3-hydroxypropionic acid, which is excreted. The chain is Probable malonic semialdehyde reductase RutE from Escherichia coli O7:K1 (strain IAI39 / ExPEC).